A 182-amino-acid polypeptide reads, in one-letter code: ATP-dependent protease subunit HslV (182 aa).

The active site involves threonine 12. Glycine 167, cysteine 170, and threonine 173 together coordinate Na(+).

It belongs to the peptidase T1B family. HslV subfamily. In terms of assembly, a double ring-shaped homohexamer of HslV is capped on each side by a ring-shaped HslU homohexamer. The assembly of the HslU/HslV complex is dependent on binding of ATP.

The protein resides in the cytoplasm. The enzyme catalyses ATP-dependent cleavage of peptide bonds with broad specificity.. Allosterically activated by HslU binding. Functionally, protease subunit of a proteasome-like degradation complex believed to be a general protein degrading machinery. The chain is ATP-dependent protease subunit HslV from Acidiphilium cryptum (strain JF-5).